The following is a 323-amino-acid chain: Cyclin-dependent kinase 1 (323 aa).

One can recognise a Protein kinase domain in the interval Y4–F306. Residues I10–V18 and K34 each bind ATP. T14 is modified (phosphothreonine). A Phosphotyrosine modification is found at Y15. Catalysis depends on D147, which acts as the Proton acceptor. T180 is modified (phosphothreonine; by CAK).

It belongs to the protein kinase superfamily. CMGC Ser/Thr protein kinase family. CDC2/CDKX subfamily. In terms of assembly, forms a stable but non-covalent complex with a regulatory subunit (SUC1) and with a cyclin.

It catalyses the reaction L-seryl-[protein] + ATP = O-phospho-L-seryl-[protein] + ADP + H(+). The enzyme catalyses L-threonyl-[protein] + ATP = O-phospho-L-threonyl-[protein] + ADP + H(+). Its activity is regulated as follows. Phosphorylation at Thr-14 or Tyr-15 inactivates the enzyme, while phosphorylation at Thr-180 activates it. Cyclin-dependent kinase that acts as a master regulator of the mitotic and meiotic cell cycles. The sequence is that of Cyclin-dependent kinase 1 from Emericella nidulans (strain FGSC A4 / ATCC 38163 / CBS 112.46 / NRRL 194 / M139) (Aspergillus nidulans).